The sequence spans 129 residues: Glycine cleavage system H protein 2 (129 aa).

A Lipoyl-binding domain is found at 24-105; sequence SVTVGISDHA…PYVSWFFKLK (82 aa). K65 carries the N6-lipoyllysine modification.

The protein belongs to the GcvH family. In terms of assembly, the glycine cleavage system is composed of four proteins: P, T, L and H. It depends on (R)-lipoate as a cofactor.

Its function is as follows. The glycine cleavage system catalyzes the degradation of glycine. The H protein shuttles the methylamine group of glycine from the P protein to the T protein. The sequence is that of Glycine cleavage system H protein 2 from Pseudomonas aeruginosa (strain ATCC 15692 / DSM 22644 / CIP 104116 / JCM 14847 / LMG 12228 / 1C / PRS 101 / PAO1).